The following is a 788-amino-acid chain: Cadherin-related family member 4 (788 aa).

The first 16 residues, 1 to 16 (MVLLRLLVFLFAPVVS), serve as a signal peptide directing secretion. The Extracellular segment spans residues 17–686 (DLCSLPCFIN…DTEAFWQPQP (670 aa)). Cadherin domains are found at residues 237 to 338 (LEQA…PPRC), 339 to 449 (LPAL…APRT), 444 to 554 (ACAP…EPPF), and 551 to 674 (EPPF…TPML). Asn-242 carries an N-linked (GlcNAc...) asparagine glycan. The helical transmembrane segment at 687–707 (WFVVVLTATGALLLLALGWLL) threads the bilayer. Residues 708-788 (GRLLQGLAQL…NTHTGARRWL (81 aa)) lie on the Cytoplasmic side of the membrane.

It localises to the membrane. In terms of biological role, cadherins are calcium-dependent cell adhesion proteins. They preferentially interact with themselves in a homophilic manner in connecting cells; cadherins may thus contribute to the sorting of heterogeneous cell types. The polypeptide is Cadherin-related family member 4 (CDHR4) (Homo sapiens (Human)).